A 214-amino-acid chain; its full sequence is Imidazole glycerol phosphate synthase subunit HisH (214 aa).

A Glutamine amidotransferase type-1 domain is found at 3–211 (TIAVIDYDMG…VSKVIPKNLA (209 aa)). Residue cysteine 81 is the Nucleophile of the active site. Active-site residues include histidine 186 and glutamate 188.

As to quaternary structure, heterodimer of HisH and HisF.

The protein localises to the cytoplasm. The catalysed reaction is 5-[(5-phospho-1-deoxy-D-ribulos-1-ylimino)methylamino]-1-(5-phospho-beta-D-ribosyl)imidazole-4-carboxamide + L-glutamine = D-erythro-1-(imidazol-4-yl)glycerol 3-phosphate + 5-amino-1-(5-phospho-beta-D-ribosyl)imidazole-4-carboxamide + L-glutamate + H(+). It carries out the reaction L-glutamine + H2O = L-glutamate + NH4(+). It functions in the pathway amino-acid biosynthesis; L-histidine biosynthesis; L-histidine from 5-phospho-alpha-D-ribose 1-diphosphate: step 5/9. In terms of biological role, IGPS catalyzes the conversion of PRFAR and glutamine to IGP, AICAR and glutamate. The HisH subunit catalyzes the hydrolysis of glutamine to glutamate and ammonia as part of the synthesis of IGP and AICAR. The resulting ammonia molecule is channeled to the active site of HisF. This is Imidazole glycerol phosphate synthase subunit HisH from Trichodesmium erythraeum (strain IMS101).